A 72-amino-acid chain; its full sequence is VKRPMNAFMVWSQHERRKIMDQWPDMHNAEISKRLGRRWELLQDSEKIPFVKEADGLLLKHMADYPNYKYRP.

Residues 1 to 69 (VKRPMNAFMV…KHMADYPNYK (69 aa)) constitute a DNA-binding region (HMG box).

It localises to the nucleus. The protein is SRY-related protein ADW4 of Alligator mississippiensis (American alligator).